The chain runs to 187 residues: Oligoribonuclease (187 aa).

The Exonuclease domain occupies 7 to 170 (LCWLDMEMTG…DDILESIEEM (164 aa)). The active site involves tyrosine 128.

This sequence belongs to the oligoribonuclease family.

The protein localises to the cytoplasm. In terms of biological role, 3'-to-5' exoribonuclease specific for small oligoribonucleotides. This Neisseria meningitidis serogroup C / serotype 2a (strain ATCC 700532 / DSM 15464 / FAM18) protein is Oligoribonuclease.